The chain runs to 1543 residues: ABC multidrug transporter AFR1 (1543 aa).

Residues 1 to 85 (MSAAGVPAEL…DGKQKRLPAD (85 aa)) form a disordered region. Residues 18-41 (TATTQNPSGLANSQVTSGPVSSAT) show a composition bias toward polar residues. Over residues 62–83 (AVEAEKAEAIDAAGDGKQKRLP) the composition is skewed to basic and acidic residues. Residue Asn-117 is glycosylated (N-linked (GlcNAc...) asparagine). A disordered region spans residues 119 to 157 (SQRSQHELHRPTTRHSVRSSFSRKDRVVSRLTQDDAEKA). The span at 140 to 157 (SRKDRVVSRLTQDDAEKA) shows a compositional bias: basic and acidic residues. 2 N-linked (GlcNAc...) asparagine glycosylation sites follow: Asn-208 and Asn-398. In terms of domain architecture, ABC transporter 1 spans 222–474 (IKVLGIFGFN…MIGLGYRDLP (253 aa)). 5 consecutive transmembrane segments (helical) span residues 585–605 (FGISTGFATSIIIALIVGSVY), 619–639 (GGLLFLGLLFNALTSFSELPS), 670–690 (VPYNASVIFLFSIVLYFMGGL), 695–715 (GAFFMFFLFVFLTFMVMSAFF), and 727–747 (VAARLASVLISFMVTYTGYMI). An N-linked (GlcNAc...) asparagine glycan is attached at Asn-823. The chain crosses the membrane as a helical span at residues 845-865 (FGILLGFFTFFMFLQMLFIEV). An ABC transporter 2 domain is found at 918-1160 (FTWEGLSYTV…VLIDYLERNG (243 aa)). 954–961 (GASGAGKT) lines the ATP pocket. Asn-1223 carries N-linked (GlcNAc...) asparagine glycosylation. The next 6 membrane-spanning stretches (helical) occupy residues 1254 to 1274 (WTRLFAHLAIGLIVTLTFLQL), 1285 to 1305 (VFAIFFATVLPALILAQIEPQ), 1336 to 1356 (MPYSLGCAVSFFLLLYYGVGF), 1366 to 1386 (FFLMILVTEVYAVTLGQAVAA), 1391 to 1411 (ILIAALFNPFLLVLFSIFCGV), and 1517 to 1537 (FGIFICYVVFNILVLLIAARF).

It belongs to the ABC transporter superfamily. ABCG family. PDR (TC 3.A.1.205) subfamily.

Its subcellular location is the cell membrane. It catalyses the reaction itraconazole(in) + ATP + H2O = itraconazole(out) + ADP + phosphate + H(+). The catalysed reaction is voriconazole(in) + ATP + H2O = voriconazole(out) + ADP + phosphate + H(+). It carries out the reaction fluconazole(in) + ATP + H2O = fluconazole(out) + ADP + phosphate + H(+). Major pleiotropic ABC efflux transporter that confers resistance to structurally and functionally unrelated compounds including azoles such as fluconazole (FLC), itraconazole (ITC), posaconazole (POS), and voriconazole (VRC). Is also able to efflux the eukaryote protein synthesis inhibitor cycloheximide (CHX). This is ABC multidrug transporter AFR1 from Cryptococcus neoformans var. grubii serotype A (strain H99 / ATCC 208821 / CBS 10515 / FGSC 9487) (Filobasidiella neoformans var. grubii).